We begin with the raw amino-acid sequence, 638 residues long: CTTNBP2 N-terminal-like protein (638 aa).

The stretch at 87 to 284 (MKQCKNMQER…KDLEAAQQHR (198 aa)) forms a coiled coil. 4 disordered regions span residues 280 to 303 (AQQHRSTSEQGREPVTMSRGTATE), 360 to 430 (RELT…PCSS), 463 to 490 (RHKFQSQADQDQQASGLQSPPSRDLSPT), and 514 to 621 (NQGP…CSPS). Residue S285 is modified to Phosphoserine. The span at 360 to 371 (RELTSDSSTENQ) shows a compositional bias: polar residues. 2 stretches are compositionally biased toward low complexity: residues 401–430 (TMPSHLPSSGSSLSPSSTASSSLTSSPCSS) and 467–477 (QSQADQDQQAS). S481, S488, S522, S526, S559, S562, and S567 each carry phosphoserine. A compositionally biased stretch (polar residues) spans 514–528 (NQGPIKPVSPNSSPF). Phosphothreonine occurs at positions 569 and 589. A compositionally biased stretch (polar residues) spans 589 to 620 (TPSQSATTPVTKTHSQASSLAATEDLASSCSP). S591 carries the post-translational modification Phosphoserine.

As to quaternary structure, interacts with CTTN/cortactin; this interaction may redistribute CTTN to stress fibers. May form homomers. Associates with the core of STRIPAK complexes composed of PP2A catalytic and scaffolding subunits, the striatins (PP2A regulatory subunits), the striatin-associated proteins MOB4, STRIP1 and STRIP2, PDCD10 and members of the STE20 kinases, such as STK24 and STK26. Predominantly expressed in skin, also detectable in spleen and lung (at protein level). Very low levels, if any, in brain (at protein level).

The protein resides in the cell projection. Its subcellular location is the lamellipodium. It localises to the cytoplasm. The protein localises to the cytoskeleton. It is found in the stress fiber. Its function is as follows. Regulates lamellipodial actin dynamics in a CTTN-dependent manner. Associates with core striatin-interacting phosphatase and kinase (STRIPAK) complex to form CTTNBP2NL-STRIPAK complexes. STRIPAK complexes have critical roles in protein (de)phosphorylation and are regulators of multiple signaling pathways including Hippo, MAPK, nuclear receptor and cytoskeleton remodeling. Different types of STRIPAK complexes are involved in a variety of biological processes such as cell growth, differentiation, apoptosis, metabolism and immune regulation. The sequence is that of CTTNBP2 N-terminal-like protein (Cttnbp2nl) from Mus musculus (Mouse).